Here is an 830-residue protein sequence, read N- to C-terminus: Serine/threonine-protein kinase atg1 (830 aa).

The Protein kinase domain occupies Y14–V307. Residues I20–V28 and K43 each bind ATP. Catalysis depends on D157, which acts as the Proton acceptor. At S346 the chain carries Phosphoserine. A compositionally biased stretch (polar residues) spans T448–P468. The segment at T448–E480 is disordered.

This sequence belongs to the protein kinase superfamily. Ser/Thr protein kinase family. APG1/unc-51/ULK1 subfamily. As to quaternary structure, homodimer. Component of the atg1 kinase complex composed of at least atg1, atg13, atg17 and atg101. Interacts directly with atg13. Phosphorylated. Dephosphorylated under depletion of nitrogen.

The catalysed reaction is L-seryl-[protein] + ATP = O-phospho-L-seryl-[protein] + ADP + H(+). It catalyses the reaction L-threonyl-[protein] + ATP = O-phospho-L-threonyl-[protein] + ADP + H(+). In terms of biological role, serine/threonine protein kinase involved in the cytoplasm to vacuole transport (Cvt) and found to be essential in autophagy, where it is required for the formation of autophagosomes. Involved in the clearance of protein aggregates which cannot be efficiently cleared by the proteasome. Required for selective autophagic degradation of the nucleus (nucleophagy) as well as for mitophagy which contributes to regulate mitochondrial quantity and quality by eliminating the mitochondria to a basal level to fulfill cellular energy requirements and preventing excess ROS production. Also involved in endoplasmic reticulum-specific autophagic process, in selective removal of ER-associated degradation (ERAD) substrates. Plays a key role in ATG9 and ATG23 cycling through the pre-autophagosomal structure and is necessary to promote ATG18 binding to ATG9 through phosphorylation of ATG9. Catalyzes phosphorylation of ATG4, decreasing the interaction between ATG4 and ATG8 and impairing deconjugation of PE-conjugated forms of ATG8. Autophagy functions to supply nitrogen and is activated when cells cannot access exogenous nitrogen, thus ensuring that they can adapt and subsequently propagate. Finally, atg13 is also required for glycogen storage during stationary phase and has a role in meiosis and sporulation. The polypeptide is Serine/threonine-protein kinase atg1 (Schizosaccharomyces pombe (strain 972 / ATCC 24843) (Fission yeast)).